A 424-amino-acid polypeptide reads, in one-letter code: Phosphomethylpyrimidine synthase (424 aa).

Residues M94, Y123, H162, 184 to 186 (SRG), 225 to 228 (NGMR), and E264 contribute to the substrate site. H268 is a binding site for Zn(2+). Residue Y291 coordinates substrate. Residue H332 participates in Zn(2+) binding. Residues C406, C409, and C413 each contribute to the [4Fe-4S] cluster site.

Belongs to the ThiC family. It depends on [4Fe-4S] cluster as a cofactor.

It carries out the reaction 5-amino-1-(5-phospho-beta-D-ribosyl)imidazole + S-adenosyl-L-methionine = 4-amino-2-methyl-5-(phosphooxymethyl)pyrimidine + CO + 5'-deoxyadenosine + formate + L-methionine + 3 H(+). Its pathway is cofactor biosynthesis; thiamine diphosphate biosynthesis. Its function is as follows. Catalyzes the synthesis of the hydroxymethylpyrimidine phosphate (HMP-P) moiety of thiamine from aminoimidazole ribotide (AIR) in a radical S-adenosyl-L-methionine (SAM)-dependent reaction. This chain is Phosphomethylpyrimidine synthase, found in Methanoculleus marisnigri (strain ATCC 35101 / DSM 1498 / JR1).